The following is a 474-amino-acid chain: MKNNEIDTIAAISTPIGRGGIGIIRVSGKLVPEVAMKLFNKIPKPRTAEYLTCIDHNGSIMEKVITLFFPEPHSFTGENILEIHGHGGQMILDLLLDRILNISSRIRLANPGEFTERAFLNEKIDLIQAESIADIINATSYQAAKSACNSLQGHFSNQIRIILNKITNFRTYIESTLDFSDQEISDISYQHIYNTLQNIIDNTNQICKLTHSGVLLRDGIKVVIAGKPNAGKSSLFNSLINKDRAIISNISGTTRDILHEYIQLNGIAFHIIDTAGFKKNSTNEIELIGMQKSKYELSKADHILWVIDSTDYSHNNSYNNIINSLKKELSSNNIEAVFITIIRNKSDLSFEHNGIDTTNKYACITLSALLNHGIDLLKKHLYDSAMLQIHKNSNFSSVEENQGNFIARKRHLKILQKVFQYLLSAKTQLQYNMTVNDCFAEDLKKAHEELAQIFGKLTPDDLLEEIFRAFCIGK.

(6S)-5-formyl-5,6,7,8-tetrahydrofolate is bound by residues arginine 25, glutamate 82, and lysine 123. The region spanning 219–386 (GIKVVIAGKP…LKKHLYDSAM (168 aa)) is the TrmE-type G domain. Residue asparagine 229 coordinates K(+). GTP is bound by residues 229–234 (NAGKSS), 248–254 (SNISGTT), and 273–276 (DTAG). Mg(2+) is bound at residue serine 233. Serine 248, isoleucine 250, and threonine 253 together coordinate K(+). Threonine 254 lines the Mg(2+) pocket. Lysine 474 is a binding site for (6S)-5-formyl-5,6,7,8-tetrahydrofolate.

This sequence belongs to the TRAFAC class TrmE-Era-EngA-EngB-Septin-like GTPase superfamily. TrmE GTPase family. Homodimer. Heterotetramer of two MnmE and two MnmG subunits. The cofactor is K(+).

It localises to the cytoplasm. In terms of biological role, exhibits a very high intrinsic GTPase hydrolysis rate. Involved in the addition of a carboxymethylaminomethyl (cmnm) group at the wobble position (U34) of certain tRNAs, forming tRNA-cmnm(5)s(2)U34. In Blochmanniella floridana, this protein is tRNA modification GTPase MnmE.